Consider the following 600-residue polypeptide: Glutamine--fructose-6-phosphate aminotransferase [isomerizing] (600 aa).

Cys2 acts as the Nucleophile; for GATase activity in catalysis. Residues 2–217 (CGIVGYIGQL…DKEMVIVTDK (216 aa)) enclose the Glutamine amidotransferase type-2 domain. SIS domains lie at 283 to 422 (ISNA…SRGK) and 452 to 590 (IARE…VDKP). The active-site For Fru-6P isomerization activity is the Lys595.

Homodimer.

It is found in the cytoplasm. The catalysed reaction is D-fructose 6-phosphate + L-glutamine = D-glucosamine 6-phosphate + L-glutamate. Its function is as follows. Catalyzes the first step in hexosamine metabolism, converting fructose-6P into glucosamine-6P using glutamine as a nitrogen source. The sequence is that of Glutamine--fructose-6-phosphate aminotransferase [isomerizing] from Bacillus licheniformis (strain ATCC 14580 / DSM 13 / JCM 2505 / CCUG 7422 / NBRC 12200 / NCIMB 9375 / NCTC 10341 / NRRL NRS-1264 / Gibson 46).